A 320-amino-acid polypeptide reads, in one-letter code: Undecaprenyl-diphosphatase (320 aa).

8 consecutive transmembrane segments (helical) span residues F9–F29, G82–W102, L130–I150, L161–L181, L191–V211, F236–A256, L265–L285, and V296–I316.

Belongs to the UppP family.

It is found in the cell inner membrane. The enzyme catalyses di-trans,octa-cis-undecaprenyl diphosphate + H2O = di-trans,octa-cis-undecaprenyl phosphate + phosphate + H(+). Its function is as follows. Catalyzes the dephosphorylation of undecaprenyl diphosphate (UPP). Confers resistance to bacitracin. This Trichormus variabilis (strain ATCC 29413 / PCC 7937) (Anabaena variabilis) protein is Undecaprenyl-diphosphatase.